We begin with the raw amino-acid sequence, 173 residues long: dCTP deaminase, dUMP-forming (173 aa).

DCTP-binding positions include 93-98, Asp111, 119-121, Gln138, and Tyr151; these read RSSTGR and TLE. Glu121 functions as the Proton donor/acceptor in the catalytic mechanism.

Belongs to the dCTP deaminase family. As to quaternary structure, homotrimer.

The enzyme catalyses dCTP + 2 H2O = dUMP + NH4(+) + diphosphate. Its pathway is pyrimidine metabolism; dUMP biosynthesis; dUMP from dCTP: step 1/1. Its function is as follows. Bifunctional enzyme that catalyzes both the deamination of dCTP to dUTP and the hydrolysis of dUTP to dUMP without releasing the toxic dUTP intermediate. The polypeptide is dCTP deaminase, dUMP-forming (Clostridium botulinum (strain Alaska E43 / Type E3)).